A 258-amino-acid chain; its full sequence is Snake venom serine proteinase 8 (258 aa).

The signal sequence occupies residues 1–18; it reads MVLIRVLANLLILQLSYA. Residues 19–24 constitute a propeptide that is removed on maturation; that stretch reads QKSSEL. The region spanning 25–249 is the Peptidase S1 domain; sequence VIGGDECNIN…YNDWIQSIIA (225 aa). 6 disulfide bridges follow: Cys-31–Cys-163, Cys-50–Cys-66, Cys-98–Cys-256, Cys-142–Cys-210, Cys-174–Cys-189, and Cys-200–Cys-225. The N-linked (GlcNAc...) asparagine glycan is linked to Asn-44. Catalysis depends on charge relay system residues His-65 and Asp-110. Catalysis depends on Ser-204, which acts as the Charge relay system.

The protein belongs to the peptidase S1 family. Snake venom subfamily. Monomer. Expressed by the venom gland.

The protein localises to the secreted. Snake venom serine protease that may act in the hemostasis system of the prey. The protein is Snake venom serine proteinase 8 of Crotalus adamanteus (Eastern diamondback rattlesnake).